The sequence spans 697 residues: U-box domain-containing protein 18 (697 aa).

The tract at residues 23-210 is U-box N-terminal domain (UND) required for EXO70B1 binding and crucial for the negative regulation of ABA-dependent stomatal movement; the sequence is SISIVTLLDS…INRILDHVGI (188 aa). The U-box domain maps to 287–361; that stretch reads LKVEDLLCPI…RKHCKTNGIV (75 aa). ARM repeat units follow at residues 420 to 459, 461 to 500, 502 to 544, 546 to 587, 589 to 631, and 657 to 696; these read SFNR…NLSK, VTGK…YLSS, EDYS…GLLM, SDNH…KLAE, PDGT…NLCL, and NGEY…FVHA.

Interacts with EXO70B1 via its U-box N-terminal domain (UND).

It localises to the endomembrane system. It carries out the reaction S-ubiquitinyl-[E2 ubiquitin-conjugating enzyme]-L-cysteine + [acceptor protein]-L-lysine = [E2 ubiquitin-conjugating enzyme]-L-cysteine + N(6)-ubiquitinyl-[acceptor protein]-L-lysine.. Its pathway is protein modification; protein ubiquitination. Its function is as follows. Functions as an E3 ubiquitin ligase. Mediates EXO70B1 ubiquitination. Involved in the regulation of abscisic acid (ABA)-mediated stomatal movements. The chain is U-box domain-containing protein 18 from Arabidopsis thaliana (Mouse-ear cress).